We begin with the raw amino-acid sequence, 117 residues long: MTRIRRGYIARRRRTKIRLFASTFRGAHSRLTRTITQQKMRALVSTQRDRGRRKRDFRRLWITRINAVTRENRVSYSYSRLIHDLYKKRLLLNRKILAQIAISNRNCLDTISNEILK.

This sequence belongs to the bacterial ribosomal protein bL20 family.

The protein localises to the plastid. Its subcellular location is the chloroplast. Functionally, binds directly to 23S ribosomal RNA and is necessary for the in vitro assembly process of the 50S ribosomal subunit. It is not involved in the protein synthesizing functions of that subunit. This Calycanthus floridus var. glaucus (Eastern sweetshrub) protein is Large ribosomal subunit protein bL20c.